The chain runs to 270 residues: DNA repair protein RecO (270 aa).

The segment at 202–221 (PELPPSTIDADTDNPSQPPS) is disordered.

This sequence belongs to the RecO family.

Its function is as follows. Involved in DNA repair and RecF pathway recombination. The chain is DNA repair protein RecO from Rhodopirellula baltica (strain DSM 10527 / NCIMB 13988 / SH1).